Here is a 66-residue protein sequence, read N- to C-terminus: UPF0370 protein YpfN (66 aa).

The chain crosses the membrane as a helical span at residues 4 to 24 (LAKYWWILVIVFLVGVLLNVI). A disordered region spans residues 39–66 (KPELPPHRDFNDKWDDDDDWPKKDQPKK). Positions 42–51 (LPPHRDFNDK) are enriched in basic and acidic residues.

Belongs to the UPF0370 family.

It localises to the cell membrane. This chain is UPF0370 protein YpfN, found in Escherichia coli O139:H28 (strain E24377A / ETEC).